We begin with the raw amino-acid sequence, 963 residues long: MAVAPRLFGGLCFRFRDQNPEVAVEGRLPISHSCVGCRRERTAMATVAANPAAAAAAVAAAAAVTEDREPQHEELPGLDSQWRQIENGESGRERPLRAGESWFLVEKHWYKQWEAYVQGGDQDSSTFPGCINNATLFQDEINWRLKEGLVEGEDYVLLPAAAWHYLVSWYGLEHGQPPIERKVIELPNIQKVEVYPVELLLVRHNDLGKSHTVQFSHTDSIGLVLRTARERFLVEPQEDTRLWAKNSEGSLDRLYDTHITVLDAALETGQLIIMETRKKDGTWPSAQLHVMNNNMSEEDEDFKGQPGICGLTNLGNTCFMNSALQCLSNVPQLTEYFLNNCYLEELNFRNPLGMKGEIAEAYADLVKQAWSGHHRSIVPHVFKNKVGHFASQFLGYQQHDSQELLSFLLDGLHEDLNRVKKKEYVELCDAAGRPDQEVAQEAWQNHKRRNDSVIVDTFHGLFKSTLVCPDCGNVSVTFDPFCYLSVPLPISHKRVLEVFFIPMDPRRKPEQHRLVVPKKGKISDLCVALSKHTGISPERMMVADVFSHRFYKLYQLEEPLSSILDRDDIFVYEVSGRIEAIEGSREDIVVPVYLRERTPARDYNNSYYGLMLFGHPLLVSVPRDRFTWEGLYNVLMYRLSRYVTKPNSDDEDDGDEKEDDEEDKDDVPGPSTGGSLRDPEPEQAGPSSGVTNRCPFLLDNCLGTSQWPPRRRRKQLFTLQTVNSNGTSDRTTSPEEVHAQPYIAIDWEPEMKKRYYDEVEAEGYVKHDCVGYVMKKAPVRLQECIELFTTVETLEKENPWYCPSCKQHQLATKKLDLWMLPEILIIHLKRFSYTKFSREKLDTLVEFPIRDLDFSEFVIQPQNESNPELYKYDLIAVSNHYGGMRDGHYTTFACNKDSGQWHYFDDNSVSPVNENQIESKAAYVLFYQRQDVARRLLSPAGSSGAPASPACSSPPSSEFMDVN.

Residues 64–93 (VTEDREPQHEELPGLDSQWRQIENGESGRE) form a disordered region. Positions 65-75 (TEDREPQHEEL) are enriched in basic and acidic residues. The DUSP domain occupies 76–184 (PGLDSQWRQI…GQPPIERKVI (109 aa)). At K245 the chain carries N6-acetyllysine. Positions 309–930 (CGLTNLGNTC…AAYVLFYQRQ (622 aa)) constitute a USP domain. The Nucleophile role is filled by C318. Disordered regions lie at residues 644 to 691 (TKPN…SGVT) and 716 to 735 (LFTL…TSPE). Position 648 is a phosphoserine (S648). Over residues 649-665 (DDEDDGDEKEDDEEDKD) the composition is skewed to acidic residues. Over residues 717-731 (FTLQTVNSNGTSDRT) the composition is skewed to polar residues. The residue at position 733 (S733) is a Phosphoserine. H888 acts as the Proton acceptor in catalysis. Residues 938–957 (SPAGSSGAPASPACSSPPSS) are compositionally biased toward low complexity. Residues 938-963 (SPAGSSGAPASPACSSPPSSEFMDVN) form a disordered region. S948 carries the phosphoserine modification.

Belongs to the peptidase C19 family. As to quaternary structure, monomer. Associated component of the Polycomb group (PcG) multiprotein PRC1-like complex. Interacts with RANBP9/RANBPM. Interacts with BRCA2. Interacts with CHUK/IKKA. Interacts with NFKBIA. Interacts with SPRY3, RAE1, MYCBP2/PAM, and KCTD6. (Microbial infection) Interacts with papilloma virus protein 16E7.

It localises to the nucleus. The protein localises to the cytoplasm. It is found in the chromosome. It carries out the reaction Thiol-dependent hydrolysis of ester, thioester, amide, peptide and isopeptide bonds formed by the C-terminal Gly of ubiquitin (a 76-residue protein attached to proteins as an intracellular targeting signal).. Protease that can remove conjugated ubiquitin from target proteins and polyubiquitin chains. Inhibits the degradation of target proteins by the proteasome. Cleaves preferentially 'Lys-6' and 'Lys-63'-linked ubiquitin chains. Has lower activity with 'Lys-11' and 'Lys-33'-linked ubiquitin chains, and extremely low activity with 'Lys-27', 'Lys-29' and 'Lys-48'-linked ubiquitin chains (in vitro). Plays a role in the regulation of pathways leading to NF-kappa-B activation. Plays a role in the regulation of DNA repair after double-stranded DNA breaks. Acts as a chromatin regulator via its association with the Polycomb group (PcG) multiprotein PRC1-like complex; may act by deubiquitinating components of the PRC1-like complex. Promotes cell proliferation by deubiquitinating phosphorylated E2F1. The sequence is that of Ubiquitin carboxyl-terminal hydrolase 11 (USP11) from Homo sapiens (Human).